A 355-amino-acid chain; its full sequence is Putative cyclin-A3-1 (355 aa).

Belongs to the cyclin family. Cyclin AB subfamily.

The polypeptide is Putative cyclin-A3-1 (CYCA3-1) (Arabidopsis thaliana (Mouse-ear cress)).